A 1175-amino-acid polypeptide reads, in one-letter code: Phospholipid-transporting ATPase IF (1175 aa).

Helical transmembrane passes span 69–89, 91–111, 287–307, and 338–358; these read FYFLIIFLVQLMIDTPTSPIT, GLPLFFVITVTAIKQGYEDWL, NTFLIIYLIILISEAIISTIL, and FISDFLAFLVLYNFIIPISLY. Catalysis depends on Asp-407, which acts as the 4-aspartylphosphate intermediate. 12 residues coordinate ATP: Asp-407, Lys-408, Thr-409, Glu-530, Phe-571, Lys-594, Arg-625, Thr-705, Gly-706, Asp-707, Arg-793, and Lys-799. Asp-407 contacts Mg(2+). Residue Thr-409 participates in Mg(2+) binding. Asp-820 provides a ligand contact to Mg(2+). 2 residues coordinate ATP: Asn-823 and Asp-824. Asp-824 is a binding site for Mg(2+). 6 consecutive transmembrane segments (helical) span residues 862–882, 910–930, 963–983, 994–1014, 1033–1053, and 1060–1080; these read LLFVHGHFYYIRIATLVQYFF, VYLTLYNICFTSLPVLIYSLV, WTVLGFSHAFIFFFGSYFLVG, MFGNWTFGTLVFTVMVITVTV, GSIIFYFIFSLFYGGILWPFL, and FVFIQLLSSGSAWFAILLMVV.

The protein belongs to the cation transport ATPase (P-type) (TC 3.A.3) family. Type IV subfamily. Component of a P4-ATPase flippase complex which consists of a catalytic alpha subunit ATP11B and an accessory beta subunit TMEM30A. Requires Mg(2+) as cofactor. As to expression, expressed in retina, brain, liver, testes and kidney (at protein level).

The protein localises to the recycling endosome membrane. It is found in the early endosome. The protein resides in the endoplasmic reticulum. It localises to the golgi apparatus. Its subcellular location is the trans-Golgi network. The catalysed reaction is ATP + H2O + phospholipidSide 1 = ADP + phosphate + phospholipidSide 2.. It catalyses the reaction a 1,2-diacyl-sn-glycero-3-phospho-L-serine(out) + ATP + H2O = a 1,2-diacyl-sn-glycero-3-phospho-L-serine(in) + ADP + phosphate + H(+). The enzyme catalyses a 1,2-diacyl-sn-glycero-3-phosphoethanolamine(out) + ATP + H2O = a 1,2-diacyl-sn-glycero-3-phosphoethanolamine(in) + ADP + phosphate + H(+). Catalytic component of a P4-ATPase flippase complex which catalyzes the hydrolysis of ATP coupled to the transport of aminophospholipids, phosphatidylserines (PS) and phosphatidylethanolamines (PE), from the outer to the inner leaflet of intracellular membranes. May contribute to the maintenance of membrane lipid asymmetry in endosome compartment. The sequence is that of Phospholipid-transporting ATPase IF from Mus musculus (Mouse).